The primary structure comprises 126 residues: Small ribosomal subunit protein uS12 (126 aa).

The disordered stretch occupies residues 1–26 (MPTINQLVRKGRASETTKSKSPALQD). A 3-methylthioaspartic acid modification is found at D89. Positions 103 to 126 (DTQGVKDRKQARSKYGAKRAKAGK) are disordered. The span at 113–126 (ARSKYGAKRAKAGK) shows a compositional bias: basic residues.

Belongs to the universal ribosomal protein uS12 family. Part of the 30S ribosomal subunit. Contacts proteins S8 and S17. May interact with IF1 in the 30S initiation complex.

In terms of biological role, with S4 and S5 plays an important role in translational accuracy. Functionally, interacts with and stabilizes bases of the 16S rRNA that are involved in tRNA selection in the A site and with the mRNA backbone. Located at the interface of the 30S and 50S subunits, it traverses the body of the 30S subunit contacting proteins on the other side and probably holding the rRNA structure together. The combined cluster of proteins S8, S12 and S17 appears to hold together the shoulder and platform of the 30S subunit. This is Small ribosomal subunit protein uS12 from Paraburkholderia xenovorans (strain LB400).